A 252-amino-acid polypeptide reads, in one-letter code: Proteasome subunit alpha type-7-1B (252 aa).

This sequence belongs to the peptidase T1A family. As to quaternary structure, the 26S proteasome consists of a 20S proteasome core and two 19S regulatory subunits. The 20S proteasome core is composed of 28 subunits that are arranged in four stacked rings, resulting in a barrel-shaped structure. The two end rings are each formed by seven alpha subunits, and the two central rings are each formed by seven beta subunits. The catalytic chamber with the active sites is on the inside of the barrel. In terms of tissue distribution, testis specific.

Its subcellular location is the cytoplasm. The protein localises to the nucleus. In terms of biological role, the proteasome is a multicatalytic proteinase complex which is characterized by its ability to cleave peptides with Arg, Phe, Tyr, Leu, and Glu adjacent to the leaving group at neutral or slightly basic pH. The proteasome has an ATP-dependent proteolytic activity. The sequence is that of Proteasome subunit alpha type-7-1B (Prosalpha4T2) from Drosophila melanogaster (Fruit fly).